We begin with the raw amino-acid sequence, 345 residues long: Phosphoribosylformylglycinamidine cyclo-ligase (345 aa).

This sequence belongs to the AIR synthase family.

The protein resides in the cytoplasm. It carries out the reaction 2-formamido-N(1)-(5-O-phospho-beta-D-ribosyl)acetamidine + ATP = 5-amino-1-(5-phospho-beta-D-ribosyl)imidazole + ADP + phosphate + H(+). It participates in purine metabolism; IMP biosynthesis via de novo pathway; 5-amino-1-(5-phospho-D-ribosyl)imidazole from N(2)-formyl-N(1)-(5-phospho-D-ribosyl)glycinamide: step 2/2. This is Phosphoribosylformylglycinamidine cyclo-ligase from Actinobacillus pleuropneumoniae serotype 5b (strain L20).